We begin with the raw amino-acid sequence, 341 residues long: Anthranilate phosphoribosyltransferase (341 aa).

5-phospho-alpha-D-ribose 1-diphosphate is bound by residues glycine 79, 82-83, threonine 87, 89-92, 107-115, and serine 119; these read GD, NIST, and KHGNRAATS. Residue glycine 79 coordinates anthranilate. Residue serine 91 participates in Mg(2+) binding. An anthranilate-binding site is contributed by asparagine 110. Residue arginine 165 participates in anthranilate binding. The Mg(2+) site is built by aspartate 224 and glutamate 225.

This sequence belongs to the anthranilate phosphoribosyltransferase family. Homodimer. Mg(2+) serves as cofactor.

The catalysed reaction is N-(5-phospho-beta-D-ribosyl)anthranilate + diphosphate = 5-phospho-alpha-D-ribose 1-diphosphate + anthranilate. Its pathway is amino-acid biosynthesis; L-tryptophan biosynthesis; L-tryptophan from chorismate: step 2/5. In terms of biological role, catalyzes the transfer of the phosphoribosyl group of 5-phosphorylribose-1-pyrophosphate (PRPP) to anthranilate to yield N-(5'-phosphoribosyl)-anthranilate (PRA). The polypeptide is Anthranilate phosphoribosyltransferase (Symbiobacterium thermophilum (strain DSM 24528 / JCM 14929 / IAM 14863 / T)).